A 145-amino-acid polypeptide reads, in one-letter code: D-aminoacyl-tRNA deacylase (145 aa).

The Gly-cisPro motif, important for rejection of L-amino acids motif lies at 137–138 (GP).

This sequence belongs to the DTD family. As to quaternary structure, homodimer.

The protein localises to the cytoplasm. The catalysed reaction is glycyl-tRNA(Ala) + H2O = tRNA(Ala) + glycine + H(+). It carries out the reaction a D-aminoacyl-tRNA + H2O = a tRNA + a D-alpha-amino acid + H(+). An aminoacyl-tRNA editing enzyme that deacylates mischarged D-aminoacyl-tRNAs. Also deacylates mischarged glycyl-tRNA(Ala), protecting cells against glycine mischarging by AlaRS. Acts via tRNA-based rather than protein-based catalysis; rejects L-amino acids rather than detecting D-amino acids in the active site. By recycling D-aminoacyl-tRNA to D-amino acids and free tRNA molecules, this enzyme counteracts the toxicity associated with the formation of D-aminoacyl-tRNA entities in vivo and helps enforce protein L-homochirality. This is D-aminoacyl-tRNA deacylase from Lactobacillus helveticus (strain DPC 4571).